A 462-amino-acid polypeptide reads, in one-letter code: Cysteine--tRNA ligase (462 aa).

Residue C24 participates in Zn(2+) binding. Positions 26–36 match the 'HIGH' region motif; it reads PTVYDDAHLGH. The Zn(2+) site is built by C199, H224, and E228. The 'KMSKS' region motif lies at 256 to 260; the sequence is KMSKS. K259 is an ATP binding site.

This sequence belongs to the class-I aminoacyl-tRNA synthetase family. As to quaternary structure, monomer. It depends on Zn(2+) as a cofactor.

It is found in the cytoplasm. The enzyme catalyses tRNA(Cys) + L-cysteine + ATP = L-cysteinyl-tRNA(Cys) + AMP + diphosphate. The polypeptide is Cysteine--tRNA ligase (cysS) (Campylobacter jejuni subsp. jejuni serotype O:2 (strain ATCC 700819 / NCTC 11168)).